A 305-amino-acid polypeptide reads, in one-letter code: MDSVDRFLYTSDHDGFLALTRETWQNRWFPSQIPLHLDVSHVHQLSDADKDFYRFLFTFLGMAERLVNFNIEDLVTNFNSHDVAHYYAEQVAMENIHGVVYANILKIFFNNSRGELLAYAAKIILDPALCEKLEWLHSRVRKATTKAQKILMFLIVEGIYFISSFYSISLCRVRGIMPGVCLANDYISRDELLHTKAASMLYNTMVEIQEKPSHAEVQALFREAVNIEIRFIQAKAAGVTLVNVVDIRRFLEATADRILRDIFVPPIFGTPPPEACPLSYTGSFKAVNFFERDNSDYTTCVTDDL.

Positions 64, 94, and 97 each coordinate Fe cation. Residue tyrosine 101 is part of the active site. Residues 150–170 (ILMFLIVEGIYFISSFYSISL) form a helical membrane-spanning segment. Fe cation is bound by residues glutamate 157, glutamate 191, and histidine 194.

Belongs to the ribonucleoside diphosphate reductase small chain family. Heterotetramer composed of a homodimer of the large subunit (R1) and a homodimer of the small subunit (R2). Larger multisubunit protein complex are also active, composed of (R1)n(R2)n. The cofactor is Fe cation.

The protein resides in the host membrane. The enzyme catalyses a 2'-deoxyribonucleoside 5'-diphosphate + [thioredoxin]-disulfide + H2O = a ribonucleoside 5'-diphosphate + [thioredoxin]-dithiol. Functionally, ribonucleoside-diphosphate reductase holoenzyme provides the precursors necessary for viral DNA synthesis. Allows virus growth in non-dividing cells, as well as reactivation from latency in infected hosts. Catalyzes the biosynthesis of deoxyribonucleotides from the corresponding ribonucleotides. The sequence is that of Ribonucleoside-diphosphate reductase small subunit from Homo sapiens (Human).